Consider the following 509-residue polypeptide: Bifunctional purine biosynthesis protein PurH (509 aa).

The MGS-like domain occupies 1 to 144 (MKRALISVSD…KNYAAVTVVV (144 aa)).

The protein belongs to the PurH family.

The catalysed reaction is (6R)-10-formyltetrahydrofolate + 5-amino-1-(5-phospho-beta-D-ribosyl)imidazole-4-carboxamide = 5-formamido-1-(5-phospho-D-ribosyl)imidazole-4-carboxamide + (6S)-5,6,7,8-tetrahydrofolate. It carries out the reaction IMP + H2O = 5-formamido-1-(5-phospho-D-ribosyl)imidazole-4-carboxamide. It participates in purine metabolism; IMP biosynthesis via de novo pathway; 5-formamido-1-(5-phospho-D-ribosyl)imidazole-4-carboxamide from 5-amino-1-(5-phospho-D-ribosyl)imidazole-4-carboxamide (10-formyl THF route): step 1/1. The protein operates within purine metabolism; IMP biosynthesis via de novo pathway; IMP from 5-formamido-1-(5-phospho-D-ribosyl)imidazole-4-carboxamide: step 1/1. This is Bifunctional purine biosynthesis protein PurH from Listeria innocua serovar 6a (strain ATCC BAA-680 / CLIP 11262).